The chain runs to 254 residues: Probable transcriptional regulatory protein HDEF_0869 (254 aa).

A disordered region spans residues 1–20; the sequence is MAGHSKWANTKHRKAAQDAK.

This sequence belongs to the TACO1 family.

It localises to the cytoplasm. This Hamiltonella defensa subsp. Acyrthosiphon pisum (strain 5AT) protein is Probable transcriptional regulatory protein HDEF_0869.